A 439-amino-acid chain; its full sequence is Glutamate-1-semialdehyde 2,1-aminomutase (439 aa).

N6-(pyridoxal phosphate)lysine is present on lysine 270.

This sequence belongs to the class-III pyridoxal-phosphate-dependent aminotransferase family. HemL subfamily. As to quaternary structure, homodimer. The cofactor is pyridoxal 5'-phosphate.

Its subcellular location is the cytoplasm. The catalysed reaction is (S)-4-amino-5-oxopentanoate = 5-aminolevulinate. It functions in the pathway porphyrin-containing compound metabolism; protoporphyrin-IX biosynthesis; 5-aminolevulinate from L-glutamyl-tRNA(Glu): step 2/2. This Kocuria rhizophila (strain ATCC 9341 / DSM 348 / NBRC 103217 / DC2201) protein is Glutamate-1-semialdehyde 2,1-aminomutase.